Here is a 523-residue protein sequence, read N- to C-terminus: GMP synthase [glutamine-hydrolyzing] (523 aa).

The Glutamine amidotransferase type-1 domain occupies 8 to 205; that stretch reads KILILDFGSQ…VVDICGCETN (198 aa). The Nucleophile role is filled by Cys-85. Residues His-179 and Glu-181 contribute to the active site. Residues 206 to 398 form the GMPS ATP-PPase domain; that stretch reads WTAENIIEDA…LGLPAEMLNR (193 aa). 233–239 is an ATP binding site; that stretch reads SGGVDSS.

In terms of assembly, homodimer.

It catalyses the reaction XMP + L-glutamine + ATP + H2O = GMP + L-glutamate + AMP + diphosphate + 2 H(+). It participates in purine metabolism; GMP biosynthesis; GMP from XMP (L-Gln route): step 1/1. Catalyzes the synthesis of GMP from XMP. The chain is GMP synthase [glutamine-hydrolyzing] from Histophilus somni (strain 129Pt) (Haemophilus somnus).